The chain runs to 196 residues: MASKEAELEALLYAAGDDGLETENLLQLLEISPAALRELANHLKDRLKNDENSGLQLICINQTYKLTTSPKCGDIISKFFQKDLSKNLSQSALEILSIIAYRQPITRVEIDDLRGVNSAGALQTLVWRGLIKVDGKKDVPGHPNLYVTTDYFLQYFNYESLADLPVIEEFEADDNPVNLFNQDDSRNKEINFDEGE.

The protein belongs to the ScpB family. As to quaternary structure, homodimer. Homodimerization may be required to stabilize the binding of ScpA to the Smc head domains. Component of a cohesin-like complex composed of ScpA, ScpB and the Smc homodimer, in which ScpA and ScpB bind to the head domain of Smc. The presence of the three proteins is required for the association of the complex with DNA.

Its subcellular location is the cytoplasm. Functionally, participates in chromosomal partition during cell division. May act via the formation of a condensin-like complex containing Smc and ScpA that pull DNA away from mid-cell into both cell halves. The sequence is that of Segregation and condensation protein B from Lactobacillus johnsonii (strain CNCM I-12250 / La1 / NCC 533).